The following is a 432-amino-acid chain: Ubiquitin-like modifier-activating enzyme 5 (432 aa).

Positions 25–47 (ETKKNQTPSVLKGPTVSQERPSA) are disordered. Residues 29 to 44 (NQTPSVLKGPTVSQER) are compositionally biased toward polar residues. 5 residues coordinate ATP: G96, D117, K140, N163, and N196. Zn(2+) contacts are provided by C238 and C241. The Glycyl thioester intermediate role is filled by C262. 2 residues coordinate Zn(2+): C315 and C320. Residues 363 to 406 (DTTEAPSSSAATEVAPGLKFAYEPTQTPKKNSSDNLKLSPSQAV) form a disordered region. Residues 386-406 (PTQTPKKNSSDNLKLSPSQAV) are compositionally biased toward polar residues.

Belongs to the ubiquitin-activating E1 family. UBA5 subfamily. As to quaternary structure, interacts with ufc-1.

Its function is as follows. E1-like enzyme which activates ufm-1. Required for interaction between ufm-1 and ufc-1. The sequence is that of Ubiquitin-like modifier-activating enzyme 5 from Caenorhabditis briggsae.